A 253-amino-acid polypeptide reads, in one-letter code: Transposase for insertion sequence element IS904 (253 aa).

One can recognise an Integrase catalytic domain in the interval 90-253 (KATAPNKVWL…SPKDFEKYNS (164 aa)).

Belongs to the transposase IS3/IS150/IS904 family.

Involved in the transposition of the insertion sequence. In Lactococcus lactis subsp. lactis (strain IL1403) (Streptococcus lactis), this protein is Transposase for insertion sequence element IS904 (nisX1).